Reading from the N-terminus, the 200-residue chain is Lipopolysaccharide core heptose(II)-phosphate phosphatase (200 aa).

The first 25 residues, 1 to 25, serve as a signal peptide directing secretion; sequence MLAFCRSSLKSKKYFIILLALAAIA.

Belongs to the phosphoglycerate mutase family. Ais subfamily.

It is found in the periplasm. Its pathway is bacterial outer membrane biogenesis; lipopolysaccharide metabolism. Its function is as follows. Catalyzes the dephosphorylation of heptose(II) of the outer membrane lipopolysaccharide core. The polypeptide is Lipopolysaccharide core heptose(II)-phosphate phosphatase (Escherichia coli O9:H4 (strain HS)).